A 237-amino-acid chain; its full sequence is tRNA-splicing endonuclease subunit Sen2-1 (237 aa).

Active-site residues include Tyr-148, His-156, and Lys-190.

The protein belongs to the tRNA-intron endonuclease family. In terms of assembly, tRNA splicing endonuclease is a heterotetramer composed of SEN2, SEN15, SEN34/LENG5 and SEN54.

Its subcellular location is the nucleus. It catalyses the reaction pretRNA = a 3'-half-tRNA molecule with a 5'-OH end + a 5'-half-tRNA molecule with a 2',3'-cyclic phosphate end + an intron with a 2',3'-cyclic phosphate and a 5'-hydroxyl terminus.. In terms of biological role, constitutes one of the two catalytic subunit of the tRNA-splicing endonuclease complex, a complex responsible for identification and cleavage of the splice sites in pre-tRNA. It cleaves pre-tRNA at the 5'- and 3'-splice sites to release the intron. The products are an intron and two tRNA half-molecules bearing 2',3'-cyclic phosphate and 5'-OH termini. There are no conserved sequences at the splice sites, but the intron is invariably located at the same site in the gene, placing the splice sites an invariant distance from the constant structural features of the tRNA body. Probably carries the active site for 5'-splice site cleavage. The polypeptide is tRNA-splicing endonuclease subunit Sen2-1 (SEN1) (Arabidopsis thaliana (Mouse-ear cress)).